A 568-amino-acid chain; its full sequence is Protein downstream neighbor of son homolog (568 aa).

Disordered stretches follow at residues 28–48 (NKLA…QVDE) and 311–355 (MPLK…DDDE). A compositionally biased stretch (polar residues) spans 315–335 (SDNSGNAHDNSFNEESTTTSL).

Belongs to the DONSON family. Expression peaks during late G1 and S phase (at protein level).

It localises to the nucleus. Its function is as follows. Essential for DNA amplification in the ovary and required for cell proliferation during development. The sequence is that of Protein downstream neighbor of son homolog (hd) from Drosophila melanogaster (Fruit fly).